Reading from the N-terminus, the 82-residue chain is ATP synthase subunit c (82 aa).

Helical transmembrane passes span 3 to 23 (PLVASASVLAAALAIGLASLG) and 57 to 77 (LAFMESLTIYGLVIALVLLFA).

It belongs to the ATPase C chain family. As to quaternary structure, F-type ATPases have 2 components, F(1) - the catalytic core - and F(0) - the membrane proton channel. F(1) has five subunits: alpha(3), beta(3), gamma(1), delta(1), epsilon(1). F(0) has four main subunits: a(1), b(1), b'(1) and c(10-14). The alpha and beta chains form an alternating ring which encloses part of the gamma chain. F(1) is attached to F(0) by a central stalk formed by the gamma and epsilon chains, while a peripheral stalk is formed by the delta, b and b' chains.

The protein resides in the cellular thylakoid membrane. F(1)F(0) ATP synthase produces ATP from ADP in the presence of a proton or sodium gradient. F-type ATPases consist of two structural domains, F(1) containing the extramembraneous catalytic core and F(0) containing the membrane proton channel, linked together by a central stalk and a peripheral stalk. During catalysis, ATP synthesis in the catalytic domain of F(1) is coupled via a rotary mechanism of the central stalk subunits to proton translocation. In terms of biological role, key component of the F(0) channel; it plays a direct role in translocation across the membrane. A homomeric c-ring of between 10-14 subunits forms the central stalk rotor element with the F(1) delta and epsilon subunits. The polypeptide is ATP synthase subunit c (Synechococcus sp. (strain PCC 6716)).